Reading from the N-terminus, the 502-residue chain is Xylulose kinase (502 aa).

82–83 (MH) lines the substrate pocket. The active-site Proton acceptor is the Asp-240.

It belongs to the FGGY kinase family.

The enzyme catalyses D-xylulose + ATP = D-xylulose 5-phosphate + ADP + H(+). Functionally, catalyzes the phosphorylation of D-xylulose to D-xylulose 5-phosphate. This chain is Xylulose kinase, found in Levilactobacillus brevis (Lactobacillus brevis).